The following is a 263-amino-acid chain: Small ribosomal subunit protein eS4, Y isoform 2 (263 aa).

The region spanning 42–104 is the S4 RNA-binding domain; the sequence is LPLIVFLRNR…TGEHFRLVYD (63 aa).

Belongs to the eukaryotic ribosomal protein eS4 family.

This chain is Small ribosomal subunit protein eS4, Y isoform 2 (RPS4Y2), found in Pan troglodytes (Chimpanzee).